Here is a 162-residue protein sequence, read N- to C-terminus: NADH-ubiquinone oxidoreductase chain 6 (162 aa).

5 helical membrane-spanning segments follow: residues 1 to 21 (MFFENSAILLCALLSIAVGYT), 32 to 52 (VMLFINSSFVLMMLGFEFLAL), 55 to 75 (LLVYVGALAVLFLFVIMLLEI), 87 to 107 (WSTLGIFVFIINGVFQITPSM), and 129 to 149 (LYLYFADLLILNSLVLTVALF).

It belongs to the complex I subunit 6 family.

The protein localises to the mitochondrion membrane. The catalysed reaction is a ubiquinone + NADH + 5 H(+)(in) = a ubiquinol + NAD(+) + 4 H(+)(out). In terms of biological role, core subunit of the mitochondrial membrane respiratory chain NADH dehydrogenase (Complex I) that is believed to belong to the minimal assembly required for catalysis. Complex I functions in the transfer of electrons from NADH to the respiratory chain. The immediate electron acceptor for the enzyme is believed to be ubiquinone. The protein is NADH-ubiquinone oxidoreductase chain 6 (ND6) of Chlamydomonas reinhardtii (Chlamydomonas smithii).